Consider the following 135-residue polypeptide: MRNTFIVCWQYLRAFALIYLCLLAGNAVSALLPFTIPGSIIGMLVLFTLLASQILPAQWVKPGCYLLIRHMALLFVPIGVGVMNYYDLVNQQFGPIVVSCLISTFIVMLVVGFSTQIMQRERATAGDRTPPKDNE.

Transmembrane regions (helical) follow at residues 5 to 25 (FIVC…LLAG), 30 to 50 (ALLP…FTLL), 63 to 83 (GCYL…VGVM), and 93 to 113 (FGPI…VVGF).

Belongs to the UPF0299 family.

The protein localises to the cell inner membrane. The protein is UPF0299 membrane protein ECA2828 of Pectobacterium atrosepticum (strain SCRI 1043 / ATCC BAA-672) (Erwinia carotovora subsp. atroseptica).